We begin with the raw amino-acid sequence, 180 residues long: ATP-dependent protease subunit HslV (180 aa).

The active site involves Thr-5. Na(+) is bound by residues Gly-161, Cys-164, and Thr-167.

It belongs to the peptidase T1B family. HslV subfamily. As to quaternary structure, a double ring-shaped homohexamer of HslV is capped on each side by a ring-shaped HslU homohexamer. The assembly of the HslU/HslV complex is dependent on binding of ATP.

It is found in the cytoplasm. The catalysed reaction is ATP-dependent cleavage of peptide bonds with broad specificity.. With respect to regulation, allosterically activated by HslU binding. Functionally, protease subunit of a proteasome-like degradation complex believed to be a general protein degrading machinery. The polypeptide is ATP-dependent protease subunit HslV (Campylobacter fetus subsp. fetus (strain 82-40)).